The following is a 201-amino-acid chain: Small ribosomal subunit protein uS4c (201 aa).

Positions 89–151 (MRLDNILFRL…QKSKTLIQNY (63 aa)) constitute an S4 RNA-binding domain.

The protein belongs to the universal ribosomal protein uS4 family. As to quaternary structure, part of the 30S ribosomal subunit. Contacts protein S5. The interaction surface between S4 and S5 is involved in control of translational fidelity.

It localises to the plastid. The protein localises to the chloroplast. One of the primary rRNA binding proteins, it binds directly to 16S rRNA where it nucleates assembly of the body of the 30S subunit. In terms of biological role, with S5 and S12 plays an important role in translational accuracy. This is Small ribosomal subunit protein uS4c (rps4) from Phaseolus vulgaris (Kidney bean).